The sequence spans 385 residues: Glucans biosynthesis protein C (385 aa).

Transmembrane regions (helical) follow at residues 17–37 (AWLM…SHTW), 60–80 (MQVF…RYPL), 91–111 (VGIP…IMLQ), 137–157 (ISHL…VWIF), 173–193 (KFSM…YAVI), 212–232 (FIVM…LAFI), 239–259 (LFTT…VAYL), 274–294 (TESV…FSFG), 311–331 (ASLF…AYIT), and 338–358 (WLGF…LYEI).

This sequence belongs to the acyltransferase 3 family. OpgC subfamily.

It localises to the cell membrane. It functions in the pathway glycan metabolism; osmoregulated periplasmic glucan (OPG) biosynthesis. Necessary for the succinyl substitution of periplasmic glucans. Could catalyze the transfer of succinyl residues from the cytoplasmic side of the membrane to the nascent glucan backbones on the periplasmic side of the membrane. In Shigella dysenteriae serotype 1 (strain Sd197), this protein is Glucans biosynthesis protein C.